A 220-amino-acid polypeptide reads, in one-letter code: Large ribosomal subunit protein uL16 (220 aa).

This sequence belongs to the universal ribosomal protein uL16 family. As to quaternary structure, component of the small ribosomal subunit. Mature ribosomes consist of a small (40S) and a large (60S) subunit. The 40S subunit contains about 33 different proteins and 1 molecule of RNA (18S). The 60S subunit contains about 49 different proteins and 3 molecules of RNA (25S, 5.8S and 5S).

The chain is Large ribosomal subunit protein uL16 (RPL10) from Euphorbia esula (Leafy spurge).